The sequence spans 210 residues: MHALARVWARLEEGLIAFLLAAMTLVTFVYVVLNNLYTLLYDLADLWEGGNETLLAIGDGVLTLAQEMTWSNALTKALFAWLIFLGIAYGVRTAGHLGVDVLVKLASRPVQRVLGVIACLACLGYAGLLCVASYDWVKTLFIAGIGAEDLDHFGIRQWHIGLIVPVGFALVFIRFAEILVRILRNRQTGLGLADEAADALKLTEHEEPKA.

The next 4 helical transmembrane spans lie at 13-33, 77-97, 113-133, and 160-180; these read EGLIAFLLAAMTLVTFVYVVL, ALFAWLIFLGIAYGVRTAGHL, VLGVIACLACLGYAGLLCVAS, and IGLIVPVGFALVFIRFAEILV.

The protein belongs to the TRAP transporter small permease family. The complex comprises the extracytoplasmic solute receptor protein DctP, and the two transmembrane proteins DctQ and DctM.

The protein localises to the cell inner membrane. In terms of biological role, part of the tripartite ATP-independent periplasmic (TRAP) transport system DctPQM involved in C4-dicarboxylates uptake. This is C4-dicarboxylate TRAP transporter small permease protein DctQ from Pseudomonas aeruginosa (strain ATCC 15692 / DSM 22644 / CIP 104116 / JCM 14847 / LMG 12228 / 1C / PRS 101 / PAO1).